The chain runs to 374 residues: Alcohol dehydrogenase class-3 (374 aa).

An N-acetylalanine modification is found at Ala-2. Positions 45, 67, 97, 100, 103, 111, and 174 each coordinate Zn(2+). Lys-233 is modified (N6-succinyllysine). Ser-247 carries the post-translational modification Phosphoserine. An N6-succinyllysine modification is found at Lys-315. A phosphoserine mark is found at Ser-324 and Ser-351.

This sequence belongs to the zinc-containing alcohol dehydrogenase family. Class-III subfamily. Homodimer. Requires Zn(2+) as cofactor. In terms of tissue distribution, ubiquitous.

It localises to the cytoplasm. The enzyme catalyses a primary alcohol + NAD(+) = an aldehyde + NADH + H(+). It carries out the reaction a secondary alcohol + NAD(+) = a ketone + NADH + H(+). It catalyses the reaction S-(hydroxymethyl)glutathione + NADP(+) = S-formylglutathione + NADPH + H(+). The catalysed reaction is S-(hydroxymethyl)glutathione + NAD(+) = S-formylglutathione + NADH + H(+). The enzyme catalyses 20-oxo-(5Z,8Z,11Z,14Z)-eicosatetraenoate + NAD(+) + H2O = (5Z,8Z,11Z,14Z)-eicosatetraenedioate + NADH + 2 H(+). It carries out the reaction 20-hydroxy-(5Z,8Z,11Z,14Z)-eicosatetraenoate + NAD(+) = 20-oxo-(5Z,8Z,11Z,14Z)-eicosatetraenoate + NADH + H(+). It catalyses the reaction S-nitrosoglutathione + NADH + H(+) = S-(hydroxysulfenamide)glutathione + NAD(+). Catalyzes the oxidation of long-chain primary alcohols and the oxidation of S-(hydroxymethyl) glutathione. Also oxidizes long chain omega-hydroxy fatty acids, such as 20-HETE, producing both the intermediate aldehyde, 20-oxoarachidonate and the end product, a dicarboxylic acid, (5Z,8Z,11Z,14Z)-eicosatetraenedioate. Class-III ADH is remarkably ineffective in oxidizing ethanol. Required for clearance of cellular formaldehyde, a cytotoxic and carcinogenic metabolite that induces DNA damage. Also acts as a S-nitroso-glutathione reductase by catalyzing the NADH-dependent reduction of S-nitrosoglutathione, thereby regulating protein S-nitrosylation. The protein is Alcohol dehydrogenase class-3 of Mus musculus (Mouse).